We begin with the raw amino-acid sequence, 233 residues long: C-type lectin domain family 2 member D2 (233 aa).

A disordered region spans residues 1 to 34 (MPSSAHLQDAPPLLSRTLTQDEEQTSLRQSSSCG). The Cytoplasmic portion of the chain corresponds to 1–76 (MPSSAHLQDA…SPESPAKLPC (76 aa)). Residues 77-97 (CYGVIMVLSVAVVALSVALSV) form a helical; Signal-anchor for type II membrane protein membrane-spanning segment. At 98 to 233 (KKTPQILTVK…KPNSYTSQCQ (136 aa)) the chain is on the extracellular side. A C-type lectin domain is found at 119-228 (VGNKCYYFNE…KSICSKPNSY (110 aa)). Asn-132 carries N-linked (GlcNAc...) asparagine glycosylation.

It is found in the cell membrane. In terms of biological role, lectin-type cell surface receptor. In Rattus norvegicus (Rat), this protein is C-type lectin domain family 2 member D2 (Clec2d2).